The following is a 389-amino-acid chain: tRNA-specific 2-thiouridylase MnmA (389 aa).

ATP contacts are provided by residues 35–42 (GMSGGVDS) and Met-61. Positions 121-123 (NPD) are interaction with target base in tRNA. Residue Cys-126 is the Nucleophile of the active site. Cys-126 and Cys-223 are disulfide-bonded. Residue Gly-151 coordinates ATP. An interaction with tRNA region spans residues 173–175 (KDQ). Catalysis depends on Cys-223, which acts as the Cysteine persulfide intermediate. The interval 335–336 (RY) is interaction with tRNA.

The protein belongs to the MnmA/TRMU family.

It is found in the cytoplasm. It catalyses the reaction S-sulfanyl-L-cysteinyl-[protein] + uridine(34) in tRNA + AH2 + ATP = 2-thiouridine(34) in tRNA + L-cysteinyl-[protein] + A + AMP + diphosphate + H(+). Catalyzes the 2-thiolation of uridine at the wobble position (U34) of tRNA, leading to the formation of s(2)U34. The protein is tRNA-specific 2-thiouridylase MnmA of Actinobacillus succinogenes (strain ATCC 55618 / DSM 22257 / CCUG 43843 / 130Z).